A 570-amino-acid chain; its full sequence is Conserved oligomeric Golgi complex subunit 8 (570 aa).

It belongs to the COG8 family. In terms of assembly, component of the conserved oligomeric Golgi complex which is composed of eight different subunits and is required for normal Golgi morphology and localization.

The protein localises to the golgi apparatus membrane. Its function is as follows. Required for normal Golgi function. The polypeptide is Conserved oligomeric Golgi complex subunit 8 (Drosophila melanogaster (Fruit fly)).